The primary structure comprises 194 residues: Ubiquitin-conjugating enzyme E2 T (194 aa).

The UBC core domain occupies 2–152 (QRVSRLKREM…AKKWTAEHAI (151 aa)). The active-site Glycyl thioester intermediate is cysteine 86. Composition is skewed to basic and acidic residues over residues 158–170 (CVET…ENKN) and 185–194 (NLEHTKKVCL). Residues 158 to 194 (CVETDGKTPENKNLKTSHKREALSAQENLEHTKKVCL) form a disordered region.

The protein belongs to the ubiquitin-conjugating enzyme family.

It localises to the nucleus. The catalysed reaction is S-ubiquitinyl-[E1 ubiquitin-activating enzyme]-L-cysteine + [E2 ubiquitin-conjugating enzyme]-L-cysteine = [E1 ubiquitin-activating enzyme]-L-cysteine + S-ubiquitinyl-[E2 ubiquitin-conjugating enzyme]-L-cysteine.. It participates in protein modification; protein ubiquitination. Accepts ubiquitin from the E1 complex and catalyzes its covalent attachment to other proteins. Catalyzes monoubiquitination. Involved in DNA repair. The sequence is that of Ubiquitin-conjugating enzyme E2 T (ube2t) from Danio rerio (Zebrafish).